We begin with the raw amino-acid sequence, 180 residues long: SAGA-associated factor 11 homolog (180 aa).

The SGF11-type zinc finger occupies 98–119 (CSCPNCNRIVAASRFAPHLEKC). The tract at residues 138–180 (RDGGNYFGADEDDEDDADWSGEKRKKKIAPVRTNGSKKNGKTS) is disordered. Over residues 146-156 (ADEDDEDDADW) the composition is skewed to acidic residues.

This sequence belongs to the SGF11 family. In terms of assembly, component of some SAGA transcription coactivator-HAT complexes. Within the SAGA complex, participates in a subcomplex of SAGA called the DUB module (deubiquitination module).

It localises to the nucleus. Functionally, component of the transcription regulatory histone acetylation (HAT) complex SAGA, a multiprotein complex that activates transcription by remodeling chromatin and mediating histone acetylation and deubiquitination. Within the SAGA complex, participates in a subcomplex that specifically deubiquitinates histone H2B. The SAGA complex is recruited to specific gene promoters by activators, where it is required for transcription. The polypeptide is SAGA-associated factor 11 homolog (Aedes aegypti (Yellowfever mosquito)).